The chain runs to 209 residues: tRNA (guanine-N(7)-)-methyltransferase (209 aa).

Asp-35, Glu-60, Asn-87, and Asp-113 together coordinate S-adenosyl-L-methionine. Asp-113 is an active-site residue. Positions 117 and 149 each coordinate substrate.

This sequence belongs to the class I-like SAM-binding methyltransferase superfamily. TrmB family.

The enzyme catalyses guanosine(46) in tRNA + S-adenosyl-L-methionine = N(7)-methylguanosine(46) in tRNA + S-adenosyl-L-homocysteine. It functions in the pathway tRNA modification; N(7)-methylguanine-tRNA biosynthesis. Catalyzes the formation of N(7)-methylguanine at position 46 (m7G46) in tRNA. The sequence is that of tRNA (guanine-N(7)-)-methyltransferase from Prochlorococcus marinus (strain MIT 9215).